Here is a 399-residue protein sequence, read N- to C-terminus: Interferon regulatory factor 9 (399 aa).

Residues 9 to 116 (TRKLRSWIVE…EPYKVYRILP (108 aa)) constitute a DNA-binding region (IRF tryptophan pentad repeat). Residues 118 to 189 (GTLPNQPRNQ…CNSELEEGAG (72 aa)) form a disordered region. The segment covering 120-129 (LPNQPRNQKS) has biased composition (polar residues). Residue S139 is modified to Phosphoserine. The segment covering 148–157 (NGRTNGVVNH) has biased composition (polar residues). Over residues 171-189 (SNRSDSNSNCNSELEEGAG) the composition is skewed to low complexity. At S393 the chain carries Phosphoserine.

It belongs to the IRF family. In terms of assembly, interacts with STAT2 in the cytoplasm. Forms the interferon-stimulated gene factor 3 complex (ISGF3) with the heterodimer STAT1:STAT2; upon stimulation.

The protein resides in the nucleus. Transcription factor that plays an essential role in anti-viral immunity. It mediates signaling by type I IFNs (IFN-alpha and IFN-beta). Following type I IFN binding to cell surface receptors, Jak kinases (TYK2 and JAK1) are activated, leading to tyrosine phosphorylation of STAT1 and STAT2. IRF9/ISGF3G associates with the phosphorylated STAT1:STAT2 dimer to form a complex termed ISGF3 transcription factor, that enters the nucleus. ISGF3 binds to the IFN stimulated response element (ISRE) to activate the transcription of interferon stimulated genes, which drive the cell in an antiviral state. The chain is Interferon regulatory factor 9 (Irf9) from Mus musculus (Mouse).